The primary structure comprises 500 residues: Melanopsin-like (500 aa).

The Extracellular segment spans residues 1-65 (MSHHSSWRGH…TVDVPDHAHY (65 aa)). N18 carries an N-linked (GlcNAc...) asparagine glycan. Residues 66 to 86 (IIGSVILIVGITGVIGNALVV) traverse the membrane as a helical segment. Residues 87–101 (YVFCRSRTLRTAGNM) are Cytoplasmic-facing. The helical transmembrane segment at 102 to 122 (FIVNLAVADFLMSVTQSPVFF) threads the bilayer. Topologically, residues 123-138 (AASLHRRWVFGERPCE) are extracellular. C137 and C215 are oxidised to a cystine. A helical membrane pass occupies residues 139–159 (LYAFCGALFGICSMMTLTAIA). Topologically, residues 160–182 (ADRCLAITQPLALVSRVSRRKAG) are cytoplasmic. A helical membrane pass occupies residues 183 to 203 (AVLVVVWLYSLGWSLPPFFGW). Residues 204–232 (SAYVPEGLQTSCSWDYMTFTPSVRAYTIL) lie on the Extracellular side of the membrane. Residues 233–253 (LFVFVFFIPLGIIGSCYFAIF) form a helical membrane-spanning segment. The Cytoplasmic segment spans residues 254 to 286 (QTIRAAGKEIRELDCGETHKVYERMQNEWKMAK). A helical transmembrane segment spans residues 287 to 307 (VALVVIVLFIISWSPYSVVAL). Topologically, residues 308–322 (TATAGYSHFLTPYMN) are extracellular. A helical membrane pass occupies residues 323 to 343 (SVPAVIAKASAIHNPIIYAIT). An N6-(retinylidene)lysine modification is found at K330. Over 344–500 (HPKYRVAIAR…SDGKALLGGN (157 aa)) the chain is Cytoplasmic. The segment at 404-428 (RWGKTRLSSASDSDSCWTESEADGS) is disordered. Positions 409–428 (RLSSASDSDSCWTESEADGS) are enriched in polar residues.

The protein belongs to the G-protein coupled receptor 1 family. Opsin subfamily. Expressed in a subset of retinal horizontal cells.

The protein localises to the cell membrane. Photoreceptor implicated in non-image-forming responses to light. The sequence is that of Melanopsin-like (opn4l) from Danio rerio (Zebrafish).